The sequence spans 275 residues: Pyridoxal phosphate homeostasis protein (275 aa).

A Phosphoserine modification is found at serine 6. Lysine 47 carries the post-translational modification N6-(pyridoxal phosphate)lysine. Tyrosine 69 is subject to Phosphotyrosine. An N6-succinyllysine modification is found at lysine 125. 2 positions are modified to phosphoserine: serine 226 and serine 244.

The protein belongs to the pyridoxal phosphate-binding protein YggS/PROSC family.

In terms of biological role, pyridoxal 5'-phosphate (PLP)-binding protein, which may be involved in intracellular homeostatic regulation of pyridoxal 5'-phosphate (PLP), the active form of vitamin B6. This chain is Pyridoxal phosphate homeostasis protein, found in Pongo abelii (Sumatran orangutan).